The following is a 1972-amino-acid chain: Myosin-11 (1972 aa).

A phosphoserine mark is found at serine 8, serine 23, and serine 40. Residues 31-81 (AAKRLVWVPSEKQGFEAASIKEEKGDEVVVELVENGKKVTVGKDDIQKMNP) form the Myosin N-terminal SH3-like domain. Positions 85–783 (SKVEDMAELT…VLAHLEEERD (699 aa)) constitute a Myosin motor domain. The residue at position 129 (lysine 129) is an N6,N6,N6-trimethyllysine. 178 to 185 (GESGAGKT) serves as a coordination point for ATP. Actin-binding stretches follow at residues 661 to 683 (LGKL…IPNH) and 762 to 776 (RIGQ…GVLA). The IQ domain maps to 786-815 (ITDVIMAFQAMCRGYLARKAFAKRQQQLTA). A coiled-coil region spans residues 844 to 1934 (LLQVTRQEEE…KSKLRRGNET (1091 aa)). The segment at 858 to 882 (EDELQKTKERQQKAENELKELEQKH) is disordered. The residue at position 1177 (threonine 1177) is a Phosphothreonine. Phosphoserine occurs at positions 1684 and 1722. 2 disordered regions span residues 1744–1800 (ELEE…LRSK) and 1866–1972 (EQYK…KASE). Polar residues predominate over residues 1762-1788 (ATQQAEQLSNELATERSTAQKNESARQ). Basic and acidic residues-rich tracts occupy residues 1789 to 1800 (QLERQNKELRSK) and 1866 to 1876 (EQYKEQAEKGN). Residues 1935-1972 (SFVPSRRSGGRRVIENADGSEEETDTRDADFNGTKASE) form a C-terminal region. Position 1954 is a phosphoserine (serine 1954). Threonine 1958 is subject to Phosphothreonine. Serine 1971 bears the Phosphoserine mark.

The protein belongs to the TRAFAC class myosin-kinesin ATPase superfamily. Myosin family. As to quaternary structure, muscle myosin is a hexameric protein that consists of 2 heavy chain subunits (MHC), 2 alkali light chain subunits (MLC) and 2 regulatory light chain subunits (MLC-2). In terms of tissue distribution, smooth muscle; expressed in the umbilical artery, bladder, esophagus and trachea. Isoform 1 is mostly found in slowly contracting tonic muscles.

Its subcellular location is the melanosome. Functionally, muscle contraction. This chain is Myosin-11 (MYH11), found in Homo sapiens (Human).